The primary structure comprises 459 residues: Cysteine--tRNA ligase (459 aa).

A Zn(2+)-binding site is contributed by C28. The 'HIGH' region signature appears at 30 to 40 (VTVYDLCHFGH). Residues C209, H234, and E238 each contribute to the Zn(2+) site. A 'KMSKS' region motif is present at residues 266-270 (KMSKS). K269 lines the ATP pocket.

Belongs to the class-I aminoacyl-tRNA synthetase family. As to quaternary structure, monomer. Zn(2+) is required as a cofactor.

It is found in the cytoplasm. The catalysed reaction is tRNA(Cys) + L-cysteine + ATP = L-cysteinyl-tRNA(Cys) + AMP + diphosphate. The polypeptide is Cysteine--tRNA ligase (Actinobacillus succinogenes (strain ATCC 55618 / DSM 22257 / CCUG 43843 / 130Z)).